The sequence spans 82 residues: Small ribosomal subunit protein uS17 (82 aa).

The protein belongs to the universal ribosomal protein uS17 family. In terms of assembly, part of the 30S ribosomal subunit.

Functionally, one of the primary rRNA binding proteins, it binds specifically to the 5'-end of 16S ribosomal RNA. The sequence is that of Small ribosomal subunit protein uS17 from Paracoccus denitrificans (strain Pd 1222).